A 143-amino-acid polypeptide reads, in one-letter code: AP-2 complex subunit sigma (143 aa).

This sequence belongs to the adaptor complexes small subunit family. In terms of assembly, adaptor protein complex 2 (AP-2) is a heterotetramer composed of two large adaptins (alpha-type subunit apl3 and beta-type subunit apl1), a medium chain (mu-type subunit apm4) and a small adaptin (sigma-type subunit aps2).

It localises to the cell membrane. The protein localises to the membrane. It is found in the coated pit. In terms of biological role, component of the adaptor complexes which link clathrin to receptors in coated vesicles. Clathrin-associated protein complexes are believed to interact with the cytoplasmic tails of membrane proteins, leading to their selection and concentration. This is AP-2 complex subunit sigma (aps2) from Schizosaccharomyces pombe (strain 972 / ATCC 24843) (Fission yeast).